Consider the following 575-residue polypeptide: Protein NRT1/ PTR FAMILY 5.6 (575 aa).

2 helical membrane passes run 44 to 64 (AALFIIAIEFSERLSYFGLAT) and 88 to 108 (WSGVTTLMPLLGGFIADAYLG). Residue Thr112 is modified to Phosphothreonine. 10 helical membrane passes run 113–133 (VLVATTIYLMGLVLLTMSWFI), 153–173 (VAFFIAIYLISIGTGGHKPSL), 195–215 (FFNWWNVSLCAGILTAVTAVA), 223–243 (WGVAGIILTVVMAISLIIFFI), 339–359 (LIINVIPIWFSTLAFGICATQ), 375–395 (IGGFTVPPASMFTLTALTLII), 420–440 (ILQRIGTGMIFSLITMIIAAL), 457–477 (VIWLAPQFMVIGFADAFTLVG), 493–513 (LGIAFYLSVIGAASFLNNLLI), and 541–561 (FYWFLAGVIAANICVFVIVAK).

Belongs to the major facilitator superfamily. Proton-dependent oligopeptide transporter (POT/PTR) (TC 2.A.17) family. As to expression, expressed in stems, shoots, leaves, flowers and siliques.

The protein resides in the membrane. The protein is Protein NRT1/ PTR FAMILY 5.6 (NPF5.6) of Arabidopsis thaliana (Mouse-ear cress).